Consider the following 406-residue polypeptide: Tyrosine--tRNA ligase (406 aa).

Y35 is an L-tyrosine binding site. The 'HIGH' region signature appears at 40 to 49; that stretch reads PTADSLHVGH. Residues Y168 and Q172 each coordinate L-tyrosine. The 'KMSKS' region motif lies at 228–232; that stretch reads KMGKT. Residue K231 coordinates ATP. Residues 340–405 enclose the S4 RNA-binding domain; it reads STVLDVIAKV…GKKNYNKIEI (66 aa).

Belongs to the class-I aminoacyl-tRNA synthetase family. TyrS type 1 subfamily. As to quaternary structure, homodimer.

It is found in the cytoplasm. It catalyses the reaction tRNA(Tyr) + L-tyrosine + ATP = L-tyrosyl-tRNA(Tyr) + AMP + diphosphate + H(+). Catalyzes the attachment of tyrosine to tRNA(Tyr) in a two-step reaction: tyrosine is first activated by ATP to form Tyr-AMP and then transferred to the acceptor end of tRNA(Tyr). The polypeptide is Tyrosine--tRNA ligase (Clostridium botulinum (strain Eklund 17B / Type B)).